A 252-amino-acid chain; its full sequence is dITP/XTP pyrophosphatase (252 aa).

7 to 12 (THNEGK) serves as a coordination point for substrate. The Proton acceptor role is filled by Asp-74. Asp-74 is a binding site for Mg(2+). Residues Ser-75 and 193-196 (FGYD) each bind substrate. The interval 202-229 (DDQPAGRVSTEPDHEGEPLTSAEMTPAE) is disordered. Residues Lys-230 and 235–236 (HR) each bind substrate.

The protein belongs to the HAM1 NTPase family. As to quaternary structure, homodimer. Mg(2+) serves as cofactor.

The catalysed reaction is XTP + H2O = XMP + diphosphate + H(+). It carries out the reaction dITP + H2O = dIMP + diphosphate + H(+). It catalyses the reaction ITP + H2O = IMP + diphosphate + H(+). Functionally, pyrophosphatase that catalyzes the hydrolysis of nucleoside triphosphates to their monophosphate derivatives, with a high preference for the non-canonical purine nucleotides XTP (xanthosine triphosphate), dITP (deoxyinosine triphosphate) and ITP. Seems to function as a house-cleaning enzyme that removes non-canonical purine nucleotides from the nucleotide pool, thus preventing their incorporation into DNA/RNA and avoiding chromosomal lesions. This Bifidobacterium longum (strain NCC 2705) protein is dITP/XTP pyrophosphatase.